A 104-amino-acid polypeptide reads, in one-letter code: DNA-directed RNA polymerase subunit omega (104 aa).

A disordered region spans residues 53–104; that stretch reads EIESGNVTIHPDPEGKREAVRRRIEEEKRRKEEEEKKIKEQIAKEKEDGEKI. Positions 63–104 are enriched in basic and acidic residues; the sequence is PDPEGKREAVRRRIEEEKRRKEEEEKKIKEQIAKEKEDGEKI.

This sequence belongs to the RNA polymerase subunit omega family. The RNAP catalytic core consists of 2 alpha, 1 beta, 1 beta' and 1 omega subunit. When a sigma factor is associated with the core the holoenzyme is formed, which can initiate transcription.

It carries out the reaction RNA(n) + a ribonucleoside 5'-triphosphate = RNA(n+1) + diphosphate. In terms of biological role, promotes RNA polymerase assembly. Latches the N- and C-terminal regions of the beta' subunit thereby facilitating its interaction with the beta and alpha subunits. The chain is DNA-directed RNA polymerase subunit omega from Streptococcus pneumoniae serotype 2 (strain D39 / NCTC 7466).